Reading from the N-terminus, the 215-residue chain is Ribonuclease T (215 aa).

The region spanning 20 to 194 (VVIDVETAGF…YDTERTAVLF (175 aa)) is the Exonuclease domain. The Mg(2+) site is built by Asp23, Glu25, His181, and Asp186. His181 (proton donor/acceptor) is an active-site residue.

This sequence belongs to the RNase T family. As to quaternary structure, homodimer. Requires Mg(2+) as cofactor.

In terms of biological role, trims short 3' overhangs of a variety of RNA species, leaving a one or two nucleotide 3' overhang. Responsible for the end-turnover of tRNA: specifically removes the terminal AMP residue from uncharged tRNA (tRNA-C-C-A). Also appears to be involved in tRNA biosynthesis. The sequence is that of Ribonuclease T from Shigella boydii serotype 4 (strain Sb227).